The sequence spans 455 residues: D-inositol 3-phosphate glycosyltransferase (455 aa).

Positions 1-25 (MSQHVSRLGGLRGRSHGHGAFGGPY) are disordered. His45 lines the 1D-myo-inositol 3-phosphate pocket. UDP-N-acetyl-alpha-D-glucosamine is bound by residues 51–52 (QP) and Gly59. Residues 56 to 61 (DAGGMN), Lys114, Tyr147, Thr171, and Arg191 contribute to the 1D-myo-inositol 3-phosphate site. Arg266 and Lys271 together coordinate UDP-N-acetyl-alpha-D-glucosamine. Mg(2+)-binding residues include Tyr341, Arg342, and Ala344. 2 residues coordinate UDP-N-acetyl-alpha-D-glucosamine: Glu354 and Glu362. Mg(2+) is bound at residue Thr368.

The protein belongs to the glycosyltransferase group 1 family. MshA subfamily. In terms of assembly, homodimer.

The enzyme catalyses 1D-myo-inositol 3-phosphate + UDP-N-acetyl-alpha-D-glucosamine = 1D-myo-inositol 2-acetamido-2-deoxy-alpha-D-glucopyranoside 3-phosphate + UDP + H(+). Functionally, catalyzes the transfer of a N-acetyl-glucosamine moiety to 1D-myo-inositol 3-phosphate to produce 1D-myo-inositol 2-acetamido-2-deoxy-glucopyranoside 3-phosphate in the mycothiol biosynthesis pathway. The sequence is that of D-inositol 3-phosphate glycosyltransferase from Streptomyces bingchenggensis (strain BCW-1).